The primary structure comprises 299 residues: ATP phosphoribosyltransferase (299 aa).

Belongs to the ATP phosphoribosyltransferase family. Long subfamily. Mg(2+) is required as a cofactor.

It is found in the cytoplasm. It carries out the reaction 1-(5-phospho-beta-D-ribosyl)-ATP + diphosphate = 5-phospho-alpha-D-ribose 1-diphosphate + ATP. It functions in the pathway amino-acid biosynthesis; L-histidine biosynthesis; L-histidine from 5-phospho-alpha-D-ribose 1-diphosphate: step 1/9. With respect to regulation, feedback inhibited by histidine. In terms of biological role, catalyzes the condensation of ATP and 5-phosphoribose 1-diphosphate to form N'-(5'-phosphoribosyl)-ATP (PR-ATP). Has a crucial role in the pathway because the rate of histidine biosynthesis seems to be controlled primarily by regulation of HisG enzymatic activity. In Pasteurella multocida (strain Pm70), this protein is ATP phosphoribosyltransferase (hisG).